The following is a 923-amino-acid chain: Cell cycle and apoptosis regulator protein 2 (923 aa).

The disordered stretch occupies residues 1–35 (MSQFKRQRINPLPGGRNFSGTASTSLLGPPPGLLT). Threonine 35 is subject to Phosphothreonine. Lysine 112 is subject to N6-acetyllysine; by KAT8. Residue lysine 123 is modified to N6-methyllysine. Residue serine 124 is modified to Phosphoserine. Disordered regions lie at residues 178–218 (LNRF…KKPR), 446–510 (KAAE…PAVI), and 568–643 (VSPP…SEDL). Omega-N-methylarginine is present on arginine 180. Over residues 188–200 (GRLDQGRSDDYDS) the composition is skewed to basic and acidic residues. Position 215 is an N6-acetyllysine; by KAT8 (lysine 215). Residues 446-458 (KAAEAAPPTQEAQ) are compositionally biased toward low complexity. At threonine 454 the chain carries Phosphothreonine; by ATM, ATR and CK2. Position 484 is a phosphothreonine (threonine 484). At serine 569 the chain carries Phosphoserine. Basic and acidic residues predominate over residues 572–602 (EPEKEEAAKEEATKEEEAIKEEVVKEPKDEA). Residue lysine 591 forms a Glycyl lysine isopeptide (Lys-Gly) (interchain with G-Cter in SUMO2 and SUMO3); alternate linkage. Lysine 591 is covalently cross-linked (Glycyl lysine isopeptide (Lys-Gly) (interchain with G-Cter in SUMO2); alternate). The interval 610 to 670 (ESEAPLKEDG…EEFAGAKLED (61 aa)) is interaction with MCC. Phosphoserine occurs at positions 627, 675, 678, 681, 687, and 808. Positions 704–923 (DCLLAFVFFD…VEKEEPAPSN (220 aa)) are interaction with NR1D1. A coiled-coil region spans residues 829–909 (LENKIHTLEL…QLEIQRVVEK (81 aa)). Threonine 897 is modified (phosphothreonine).

In terms of assembly, component of the DBIRD complex. Interacts with ZNF326/ZIRD; the interaction is direct. Interacts (via N-terminus) with SIRT1, which inhibits the deacetylation of substrates. Interacts (via N-terminus) with SUV39H1; this interaction abolishes the interaction with SIRT1. Component of a nuclear receptor-mediated transcription complex composed of at least ZNF335, CCAR2 and EMSY; the complex stimulates the transcription of nuclear receptor target genes such as SOX9 and HOXA1. Within the complex interacts with EMSY and interacts with ZNF335 (via C-terminus). Components of this complex may associate with components of a histone methylation complex to form a complex at least composed of ZNF335, HCFC1, CCAR2, EMSY, MKI67, RBBP5, ASH2L and WDR5. Within this complex, interacts with ASH2L. Interacts with NR1D1. Interacts (via N-terminus) with ESR1 and ESR2. Interacts (via N-terminus) with HDAC3 (via C-terminus). Interacts with HDAC1 and MED2F. Interacts with MCC. Interacts (via N-terminus) with NR1H2 and NR1H3 in a ligand-independent manner. Interacts with CSNK2A1. Interacts (via N-terminus) with p53/TP53. Interacts (via N-terminus) with BRCA1 (via the BRCT domains). Interacts (via N-terminus) with CHEK2 (via protein kinase domain). Interacts with PSEM3. Interacts (via N-terminus) with PSIA3 and SENP1. The sumoylated form shows a preferential interaction with SIRT1 as compared to its unmodified form. Interacts with CECR2; may form part of the CERF-1 and/or CEF-5 ISWI chromatin remodeling complexes in embryonic stem cells. In terms of processing, ATM/ATR-mediated phosphorylation at Thr-454 upon DNA damage promotes binding to SIRT1. Phosphorylation at Thr-454 promotes its sumoylation by switching the binding partner of CCAR2 from SENP1 to PIAS3. Acetylation at Lys-112 and Lys-215 by KAT8 prevents inhibitory binding to SIRT1 and increases its deacetylase activity. Post-translationally, genotoxic stress induces its sumoylation and sumoylation promotes the SIRT1-CCAR2 interaction which in turn inhibits SIRT1-mediated deacetylation of p53/TP53. Sumoylation leads to transcriptional activation of p53/TP53 by sequestering SIRT1 from p53/TP53. Desumoylated by SENP1. Expressed in gastric carcinoma tissue and the expression gradually increases with the progression of the carcinoma (at protein level). Expressed ubiquitously in normal tissues. Expressed in 84 to 100% of neoplastic breast, lung, and colon tissues.

Its subcellular location is the nucleus. The protein resides in the cytoplasm. It localises to the cytoskeleton. It is found in the spindle. Its function is as follows. Core component of the DBIRD complex, a multiprotein complex that acts at the interface between core mRNP particles and RNA polymerase II (RNAPII) and integrates transcript elongation with the regulation of alternative splicing: the DBIRD complex affects local transcript elongation rates and alternative splicing of a large set of exons embedded in (A + T)-rich DNA regions. Inhibits SIRT1 deacetylase activity leading to increasing levels of p53/TP53 acetylation and p53-mediated apoptosis. Inhibits SUV39H1 methyltransferase activity. Mediates ligand-dependent transcriptional activation by nuclear hormone receptors. Plays a critical role in maintaining genomic stability and cellular integrity following UV-induced genotoxic stress. Regulates the circadian expression of the core clock components NR1D1 and BMAL1. Enhances the transcriptional repressor activity of NR1D1 through stabilization of NR1D1 protein levels by preventing its ubiquitination and subsequent degradation. Represses the ligand-dependent transcriptional activation function of ESR2. Acts as a regulator of PCK1 expression and gluconeogenesis by a mechanism that involves, at least in part, both NR1D1 and SIRT1. Negatively regulates the deacetylase activity of HDAC3 and can alter its subcellular localization. Positively regulates the beta-catenin pathway (canonical Wnt signaling pathway) and is required for MCC-mediated repression of the beta-catenin pathway. Represses ligand-dependent transcriptional activation function of NR1H2 and NR1H3 and inhibits the interaction of SIRT1 with NR1H3. Plays an important role in tumor suppression through p53/TP53 regulation; stabilizes p53/TP53 by affecting its interaction with ubiquitin ligase MDM2. Represses the transcriptional activator activity of BRCA1. Inhibits SIRT1 in a CHEK2 and PSEM3-dependent manner and inhibits the activity of CHEK2 in vitro. The polypeptide is Cell cycle and apoptosis regulator protein 2 (CCAR2) (Homo sapiens (Human)).